The primary structure comprises 249 residues: Coproheme decarboxylase (249 aa).

Fe-coproporphyrin III is bound by residues Arg131, 145–149 (YPMDK), His172, and Gln185. Residue Tyr145 is part of the active site.

The protein belongs to the ChdC family. Type 1 subfamily. It depends on Fe-coproporphyrin III as a cofactor.

The enzyme catalyses Fe-coproporphyrin III + 2 H2O2 + 2 H(+) = heme b + 2 CO2 + 4 H2O. It catalyses the reaction Fe-coproporphyrin III + H2O2 + H(+) = harderoheme III + CO2 + 2 H2O. It carries out the reaction harderoheme III + H2O2 + H(+) = heme b + CO2 + 2 H2O. It participates in porphyrin-containing compound metabolism; protoheme biosynthesis. Its function is as follows. Involved in coproporphyrin-dependent heme b biosynthesis. Catalyzes the decarboxylation of Fe-coproporphyrin III (coproheme) to heme b (protoheme IX), the last step of the pathway. The reaction occurs in a stepwise manner with a three-propionate intermediate. The chain is Coproheme decarboxylase from Staphylococcus haemolyticus (strain JCSC1435).